A 272-amino-acid chain; its full sequence is MSIYTNSKPWTVPALAEAKRNGSKIVMLTAYDAGFARILDANGVDLVLVGDSLGMVVQGHDSTLPVSVHDMVYHTACVARGVRQAMLVVDLPFQADASPERALEAATALLRVGAQMIKIEGAGHKLEVISYLVEREIPVCSHLGLTPQSVLRLGGYKVQGRGEEAGGRLRAEARAAVEAGATLLLLECVPSQLAAQITTDVSVPTIGIGAGAGCDGQVLVLHDLLGLDSGHPRPKFVKDFLAHGGSVAGAVRAYANAVRDGSFPDVEHTYTS.

Mg(2+)-binding residues include Asp51 and Asp90. Residues 51–52, Asp90, and Lys118 each bind 3-methyl-2-oxobutanoate; that span reads DS. A Mg(2+)-binding site is contributed by Glu120. The active-site Proton acceptor is the Glu187.

This sequence belongs to the PanB family. As to quaternary structure, homodecamer; pentamer of dimers. It depends on Mg(2+) as a cofactor.

The protein localises to the cytoplasm. The catalysed reaction is 3-methyl-2-oxobutanoate + (6R)-5,10-methylene-5,6,7,8-tetrahydrofolate + H2O = 2-dehydropantoate + (6S)-5,6,7,8-tetrahydrofolate. It functions in the pathway cofactor biosynthesis; (R)-pantothenate biosynthesis; (R)-pantoate from 3-methyl-2-oxobutanoate: step 1/2. Its function is as follows. Catalyzes the reversible reaction in which hydroxymethyl group from 5,10-methylenetetrahydrofolate is transferred onto alpha-ketoisovalerate to form ketopantoate. This is 3-methyl-2-oxobutanoate hydroxymethyltransferase from Xylella fastidiosa (strain M12).